The following is a 231-amino-acid chain: MAKISKRVQALRAKVDRNRIYPVAEALALVKECATAKFDESIDVAVNLGVDARKSDQVVRGSVVLPAGTGKTVRVAVFAQGDKAEAARAAGADVVGFDDLAEQVKGGTIDFDLCIATPDAMRVVGQLGQILGPRGLMPNPKVGTVTMDVTTAVKNAKAGQVQYRTDKGGLVHATIGRASFGVEALQQNLNAFIEALVKARPAAAKGVYLRRVAVSSTMGAGVRVEPTTASA.

This sequence belongs to the universal ribosomal protein uL1 family. As to quaternary structure, part of the 50S ribosomal subunit.

Functionally, binds directly to 23S rRNA. The L1 stalk is quite mobile in the ribosome, and is involved in E site tRNA release. Its function is as follows. Protein L1 is also a translational repressor protein, it controls the translation of the L11 operon by binding to its mRNA. This Azoarcus sp. (strain BH72) protein is Large ribosomal subunit protein uL1.